We begin with the raw amino-acid sequence, 349 residues long: UDP-3-O-acylglucosamine N-acyltransferase (349 aa).

Histidine 248 functions as the Proton acceptor in the catalytic mechanism.

It belongs to the transferase hexapeptide repeat family. LpxD subfamily. Homotrimer.

It carries out the reaction a UDP-3-O-[(3R)-3-hydroxyacyl]-alpha-D-glucosamine + a (3R)-hydroxyacyl-[ACP] = a UDP-2-N,3-O-bis[(3R)-3-hydroxyacyl]-alpha-D-glucosamine + holo-[ACP] + H(+). It functions in the pathway bacterial outer membrane biogenesis; LPS lipid A biosynthesis. Its function is as follows. Catalyzes the N-acylation of UDP-3-O-acylglucosamine using 3-hydroxyacyl-ACP as the acyl donor. Is involved in the biosynthesis of lipid A, a phosphorylated glycolipid that anchors the lipopolysaccharide to the outer membrane of the cell. The chain is UDP-3-O-acylglucosamine N-acyltransferase from Gloeothece citriformis (strain PCC 7424) (Cyanothece sp. (strain PCC 7424)).